A 179-amino-acid polypeptide reads, in one-letter code: Acireductone dioxygenase (179 aa).

Fe(2+)-binding residues include histidine 85, histidine 87, glutamate 91, and histidine 132. Residues histidine 85, histidine 87, glutamate 91, and histidine 132 each coordinate Ni(2+).

The protein belongs to the acireductone dioxygenase (ARD) family. The cofactor is Fe(2+). Ni(2+) is required as a cofactor.

Its subcellular location is the cytoplasm. The protein resides in the nucleus. The enzyme catalyses 1,2-dihydroxy-5-(methylsulfanyl)pent-1-en-3-one + O2 = 4-methylsulfanyl-2-oxobutanoate + formate + 2 H(+). It carries out the reaction 1,2-dihydroxy-5-(methylsulfanyl)pent-1-en-3-one + O2 = 3-(methylsulfanyl)propanoate + CO + formate + 2 H(+). Its pathway is amino-acid biosynthesis; L-methionine biosynthesis via salvage pathway; L-methionine from S-methyl-5-thio-alpha-D-ribose 1-phosphate: step 5/6. Functionally, catalyzes 2 different reactions between oxygen and the acireductone 1,2-dihydroxy-3-keto-5-methylthiopentene (DHK-MTPene) depending upon the metal bound in the active site. Fe-containing acireductone dioxygenase (Fe-ARD) produces formate and 2-keto-4-methylthiobutyrate (KMTB), the alpha-ketoacid precursor of methionine in the methionine recycle pathway. Ni-containing acireductone dioxygenase (Ni-ARD) produces methylthiopropionate, carbon monoxide and formate, and does not lie on the methionine recycle pathway. The sequence is that of Acireductone dioxygenase from Saccharomyces cerevisiae (strain ATCC 204508 / S288c) (Baker's yeast).